The following is a 95-amino-acid chain: DNA-directed RNA polymerase subunit Rpo11 (95 aa).

The protein belongs to the archaeal Rpo11/eukaryotic RPB11/RPC19 RNA polymerase subunit family. As to quaternary structure, part of the RNA polymerase complex.

The protein resides in the cytoplasm. It carries out the reaction RNA(n) + a ribonucleoside 5'-triphosphate = RNA(n+1) + diphosphate. In terms of biological role, DNA-dependent RNA polymerase (RNAP) catalyzes the transcription of DNA into RNA using the four ribonucleoside triphosphates as substrates. This Thermococcus sibiricus (strain DSM 12597 / MM 739) protein is DNA-directed RNA polymerase subunit Rpo11.